Here is a 342-residue protein sequence, read N- to C-terminus: Ribosomal RNA small subunit methyltransferase C (342 aa).

It belongs to the methyltransferase superfamily. RsmC family. As to quaternary structure, monomer.

The protein localises to the cytoplasm. The catalysed reaction is guanosine(1207) in 16S rRNA + S-adenosyl-L-methionine = N(2)-methylguanosine(1207) in 16S rRNA + S-adenosyl-L-homocysteine + H(+). Functionally, specifically methylates the guanine in position 1207 of 16S rRNA in the 30S particle. The sequence is that of Ribosomal RNA small subunit methyltransferase C from Shewanella oneidensis (strain ATCC 700550 / JCM 31522 / CIP 106686 / LMG 19005 / NCIMB 14063 / MR-1).